A 338-amino-acid chain; its full sequence is Erlin-2 (338 aa).

At 1-3 the chain is on the cytoplasmic side; it reads MAQ. A helical transmembrane segment spans residues 4 to 24; that stretch reads LGAVVAVAASFFCASLFSAVH. Residues 25–338 are Lumenal-facing; it reads KIEEGHIGVY…DEPMEADSEN (314 aa). N-linked (GlcNAc...) asparagine glycosylation is present at Asn106. The interaction with ERLIN1 stretch occupies residues 177–309; sequence EAIRRNYELM…DIPNMFMDSA (133 aa). At Lys267 the chain carries N6-acetyllysine.

Belongs to the band 7/mec-2 family. In terms of assembly, forms a heteromeric complex with ERLIN1. In complex with ERLIN1, interacts with RNF170. Interacts with activated ITPR1, independently of the degree of ITPR1 polyubiquitination. Interacts with SCAP, INSIG1, SREBF1 and SREBF2 under cholesterol sufficiency conditions; indicative for an association with the SCAP-SREBP-INSIG complex. Probably part of an AMFR/gp78 and INSIG1-containing ubiquitin ligase complex involved in ERAD of HMGCR. Interacts with TMUB1; TMUB1 bridges the association with AMFR. Interacts with SYVN1 and RNF139. Interacts with TMEM259. Interacts with TMEM41B. Deubiquitinated by USP25; leading to stabilization.

The protein resides in the endoplasmic reticulum membrane. Its function is as follows. Component of the ERLIN1/ERLIN2 complex which mediates the endoplasmic reticulum-associated degradation (ERAD) of inositol 1,4,5-trisphosphate receptors (IP3Rs) such as ITPR1. Promotes sterol-accelerated ERAD of HMGCR probably implicating an AMFR/gp78-containing ubiquitin ligase complex. Involved in regulation of cellular cholesterol homeostasis by regulation the SREBP signaling pathway. May promote ER retention of the SCAP-SREBF complex. The sequence is that of Erlin-2 (ERLIN2) from Bos taurus (Bovine).